The chain runs to 500 residues: V-type proton ATPase subunit B (500 aa).

Belongs to the ATPase alpha/beta chains family. As to quaternary structure, V-ATPase is a heteromultimeric enzyme composed of a peripheral catalytic V1 complex (main components: subunits A, B, C, D, E, and F) attached to an integral membrane V0 proton pore complex (main component: the proteolipid protein).

In terms of biological role, non-catalytic subunit of the peripheral V1 complex of vacuolar ATPase. V-ATPase is responsible for acidifying a variety of intracellular compartments in eukaryotic cells. The sequence is that of V-type proton ATPase subunit B from Cyanidium caldarium (Red alga).